We begin with the raw amino-acid sequence, 209 residues long: Ribonuclease HII (209 aa).

An RNase H type-2 domain is found at 20 to 209; the sequence is DSEIGIDEVG…KSFLNKLNLI (190 aa). A divalent metal cation is bound by residues Asp-26, Glu-27, and Asp-122.

The protein belongs to the RNase HII family. Mn(2+) is required as a cofactor. It depends on Mg(2+) as a cofactor.

The protein resides in the cytoplasm. It carries out the reaction Endonucleolytic cleavage to 5'-phosphomonoester.. Endonuclease that specifically degrades the RNA of RNA-DNA hybrids. In Prochlorococcus marinus subsp. pastoris (strain CCMP1986 / NIES-2087 / MED4), this protein is Ribonuclease HII.